A 324-amino-acid polypeptide reads, in one-letter code: Olfactory receptor 52N5 (324 aa).

The Extracellular portion of the chain corresponds to 1–33 (MPLFNSLCWFPTIHVTPPSFILNGIPGLERVHV). Residues 34-54 (WISLPLCTMYIIFLVGNLGLV) form a helical membrane-spanning segment. Residues 55–62 (YLIYYEES) are Cytoplasmic-facing. Residues 63 to 84 (LHHPMYFFFGHALSLIDLLTCT) traverse the membrane as a helical segment. Topologically, residues 85-108 (TTLPNALCIFWFSLKEINFNACLA) are extracellular. C106 and C198 form a disulfide bridge. The helical transmembrane segment at 109–129 (QMFFVHGFTGVESGVLMLMAL) threads the bilayer. Over 130–148 (DRYVAICYPLRYATTLTNP) the chain is Cytoplasmic. The chain crosses the membrane as a helical span at residues 149 to 169 (IIAKAELATFLRGVLLMIPFP). Over 170–205 (FLVKRLPFCQSNIISHTYCDHMSVVKLSCASIKVNV) the chain is Extracellular. The helical transmembrane segment at 206 to 226 (IYGLMVALLIGVFDICCISLS) threads the bilayer. The Cytoplasmic portion of the chain corresponds to 227-246 (YTLILKAAISLSSSDARQKA). Residues 247 to 267 (FSTCTAHISAIIITYVPAFFT) traverse the membrane as a helical segment. The Extracellular segment spans residues 268-283 (FFAHRFGGHTIPPSLH). Residues 284–304 (IIVANLYLLLPPTLNPIVYGV) form a helical membrane-spanning segment. The Cytoplasmic segment spans residues 305–324 (KTKQIRKSVIKFFQGDKGAG).

It belongs to the G-protein coupled receptor 1 family.

It is found in the cell membrane. In terms of biological role, odorant receptor. This Homo sapiens (Human) protein is Olfactory receptor 52N5 (OR52N5).